A 214-amino-acid chain; its full sequence is Late embryogenesis abundant protein At1g64065 (214 aa).

The helical transmembrane segment at 41-61 (VYSLTIIVIIFALCLILSSIF) threads the bilayer.

It belongs to the LEA type 2 family.

It is found in the membrane. The chain is Late embryogenesis abundant protein At1g64065 from Arabidopsis thaliana (Mouse-ear cress).